The chain runs to 1223 residues: DNA-directed RNA polymerase subunit beta' (1223 aa).

The Zn(2+) site is built by cysteine 60, cysteine 62, cysteine 75, and cysteine 78. 3 residues coordinate Mg(2+): aspartate 449, aspartate 451, and aspartate 453. Residues cysteine 818, cysteine 892, cysteine 899, and cysteine 902 each coordinate Zn(2+).

Belongs to the RNA polymerase beta' chain family. As to quaternary structure, the RNAP catalytic core consists of 2 alpha, 1 beta, 1 beta' and 1 omega subunit. When a sigma factor is associated with the core the holoenzyme is formed, which can initiate transcription. Mg(2+) is required as a cofactor. Requires Zn(2+) as cofactor.

It carries out the reaction RNA(n) + a ribonucleoside 5'-triphosphate = RNA(n+1) + diphosphate. DNA-dependent RNA polymerase catalyzes the transcription of DNA into RNA using the four ribonucleoside triphosphates as substrates. The chain is DNA-directed RNA polymerase subunit beta' from Lactobacillus gasseri (strain ATCC 33323 / DSM 20243 / BCRC 14619 / CIP 102991 / JCM 1131 / KCTC 3163 / NCIMB 11718 / NCTC 13722 / AM63).